Here is a 378-residue protein sequence, read N- to C-terminus: Alcohol dehydrogenase class-3 (378 aa).

A1 carries the post-translational modification N-acetylalanine. Residue C46 participates in Zn(2+) binding. H47 is an NAD(+) binding site. Residues T48 and H68 each contribute to the an alcohol site. Zn(2+) contacts are provided by H68, E69, C98, C101, C104, C112, and C176. NAD(+)-binding positions include 201 to 206, D225, K230, 294 to 296, 319 to 321, and R371; these read GLGTVG, VGV, and TAF.

The protein belongs to the zinc-containing alcohol dehydrogenase family. Class-III subfamily. In terms of assembly, homodimer. The cofactor is Zn(2+).

It is found in the cytoplasm. The enzyme catalyses a primary alcohol + NAD(+) = an aldehyde + NADH + H(+). It catalyses the reaction a secondary alcohol + NAD(+) = a ketone + NADH + H(+). The catalysed reaction is S-(hydroxymethyl)glutathione + NADP(+) = S-formylglutathione + NADPH + H(+). It carries out the reaction S-(hydroxymethyl)glutathione + NAD(+) = S-formylglutathione + NADH + H(+). Functionally, class-III ADH is remarkably ineffective in oxidizing ethanol, but it readily catalyzes the oxidation of long-chain primary alcohols and the oxidation of S-(hydroxymethyl) glutathione. The sequence is that of Alcohol dehydrogenase class-3 from Pisum sativum (Garden pea).